Consider the following 174-residue polypeptide: Shikimate kinase 2 (174 aa).

ATP is bound at residue 12-17; it reads GAGKTT. Mg(2+) is bound by residues threonine 16 and aspartate 32. 3 residues coordinate substrate: aspartate 34, arginine 58, and glycine 79. Residues 112 to 126 form an LID domain region; the sequence is MQQPESTQRPSLTGK. Arginine 120 is a binding site for ATP. Arginine 139 lines the substrate pocket.

This sequence belongs to the shikimate kinase family. AroL subfamily. As to quaternary structure, monomer. Requires Mg(2+) as cofactor.

The protein resides in the cytoplasm. It carries out the reaction shikimate + ATP = 3-phosphoshikimate + ADP + H(+). The protein operates within metabolic intermediate biosynthesis; chorismate biosynthesis; chorismate from D-erythrose 4-phosphate and phosphoenolpyruvate: step 5/7. Catalyzes the specific phosphorylation of the 3-hydroxyl group of shikimic acid using ATP as a cosubstrate. The polypeptide is Shikimate kinase 2 (Photorhabdus laumondii subsp. laumondii (strain DSM 15139 / CIP 105565 / TT01) (Photorhabdus luminescens subsp. laumondii)).